We begin with the raw amino-acid sequence, 335 residues long: Serpentine receptor class gamma-11 (335 aa).

Helical transmembrane passes span 33 to 53, 66 to 86, 98 to 118, 154 to 174, 202 to 222, 242 to 262, and 271 to 291; these read FLQIAYLIPGGILNILLLYTI, FFLIYSTDCFVSFSMIFLDII, PIIAPMFYEPLIGFKIMMIVL, LKYLIILVFVIPFSIDWNLII, FQLIFITIALLFTIVCTSVIF, GTAYISMSFIILVVFQFLFAF, and TIFGYSLLSYDILNVGSPIIM.

Belongs to the nematode receptor-like protein srg family.

Its subcellular location is the membrane. The sequence is that of Serpentine receptor class gamma-11 (srg-11) from Caenorhabditis elegans.